Consider the following 494-residue polypeptide: Glutamyl-tRNA(Gln) amidotransferase subunit A (494 aa).

Catalysis depends on charge relay system residues Lys81 and Ser156. Ser180 (acyl-ester intermediate) is an active-site residue.

Belongs to the amidase family. GatA subfamily. In terms of assembly, heterotrimer of A, B and C subunits.

It catalyses the reaction L-glutamyl-tRNA(Gln) + L-glutamine + ATP + H2O = L-glutaminyl-tRNA(Gln) + L-glutamate + ADP + phosphate + H(+). Functionally, allows the formation of correctly charged Gln-tRNA(Gln) through the transamidation of misacylated Glu-tRNA(Gln) in organisms which lack glutaminyl-tRNA synthetase. The reaction takes place in the presence of glutamine and ATP through an activated gamma-phospho-Glu-tRNA(Gln). The chain is Glutamyl-tRNA(Gln) amidotransferase subunit A from Mycobacterium bovis (strain ATCC BAA-935 / AF2122/97).